The sequence spans 203 residues: Putative zinc finger protein 876 (203 aa).

C2H2-type zinc fingers lie at residues 63-85, 91-113, 119-141, and 147-169; these read YTCEECGKAFYRSSHLTEHKNIH, YKCEECGNAFYRSSHLTKHKRIH, YKCEECGKAFRQSSALNEHKKIH, and YKCKECGKAFRWSRSLNEHTNIH. The C2H2-type 5; degenerate zinc finger occupies 175-197; that stretch reads YTCEECGKDFTWSSTLTVHQRIQ.

It belongs to the krueppel C2H2-type zinc-finger protein family.

It is found in the nucleus. Its function is as follows. May be involved in transcriptional regulation. This chain is Putative zinc finger protein 876 (ZNF876P), found in Homo sapiens (Human).